The sequence spans 328 residues: MAKIYRDGDASLDWLKGKTIAVIGYGIQGRAQALNLRDSGLDVIIGARRGGNSWEAARRDGFQVYEVGEAVAKADVVMMLIPDMEQPHVWREQVAPNLRKGAVVDFAHGFNIHYKLITPPPYVDVVMVAPKGPGKAVREEFLAGRGVPALVAVYQDYSGAALKYALAIAKGIGATRAGVIETTFAEETETDLIGEQVVLVGGLMELIKKGFEVLVEMGYQPEVAYFEVLNEAKLIMDLIWQRGIYGMLNGVSDTAKYGGLTVGPRVIDDEVKEKMRRAAARVKSGEFAKEWVEEYQRGAPRLRELMEKAKNHPIEAVGAEMRKLLFGP.

The 181-residue stretch at 2-182 (AKIYRDGDAS…GATRAGVIET (181 aa)) folds into the KARI N-terminal Rossmann domain. Residues 25-28 (YGIQ), Arg48, Ser53, and 83-86 (DMEQ) contribute to the NADP(+) site. Residue His108 is part of the active site. Gly134 is an NADP(+) binding site. The KARI C-terminal knotted domain maps to 183-328 (TFAEETETDL…AEMRKLLFGP (146 aa)). Residues Asp191, Glu195, Glu227, and Glu231 each coordinate Mg(2+). Ser252 contributes to the substrate binding site.

Belongs to the ketol-acid reductoisomerase family. The cofactor is Mg(2+).

It catalyses the reaction (2R)-2,3-dihydroxy-3-methylbutanoate + NADP(+) = (2S)-2-acetolactate + NADPH + H(+). It carries out the reaction (2R,3R)-2,3-dihydroxy-3-methylpentanoate + NADP(+) = (S)-2-ethyl-2-hydroxy-3-oxobutanoate + NADPH + H(+). It participates in amino-acid biosynthesis; L-isoleucine biosynthesis; L-isoleucine from 2-oxobutanoate: step 2/4. Its pathway is amino-acid biosynthesis; L-valine biosynthesis; L-valine from pyruvate: step 2/4. Involved in the biosynthesis of branched-chain amino acids (BCAA). Catalyzes an alkyl-migration followed by a ketol-acid reduction of (S)-2-acetolactate (S2AL) to yield (R)-2,3-dihydroxy-isovalerate. In the isomerase reaction, S2AL is rearranged via a Mg-dependent methyl migration to produce 3-hydroxy-3-methyl-2-ketobutyrate (HMKB). In the reductase reaction, this 2-ketoacid undergoes a metal-dependent reduction by NADPH to yield (R)-2,3-dihydroxy-isovalerate. The sequence is that of Ketol-acid reductoisomerase (NADP(+)) from Pyrobaculum calidifontis (strain DSM 21063 / JCM 11548 / VA1).